The primary structure comprises 459 residues: Bifunctional protein GlmU (459 aa).

The pyrophosphorylase stretch occupies residues 1 to 230; sequence MSNRFAVILA…FDETLGVNDR (230 aa). UDP-N-acetyl-alpha-D-glucosamine is bound by residues 9-12, K23, Q73, and 78-79; these read LAAG and GT. Position 103 (D103) interacts with Mg(2+). The UDP-N-acetyl-alpha-D-glucosamine site is built by G140, E155, N170, and N228. A Mg(2+)-binding site is contributed by N228. Residues 231–251 are linker; sequence VALSQAEIIMKNRINRKNMVN. The tract at residues 252–459 is N-acetyltransferase; it reads GVTIIDPSNT…VDQLLNKKKS (208 aa). Residues R333 and K351 each contribute to the UDP-N-acetyl-alpha-D-glucosamine site. Catalysis depends on H363, which acts as the Proton acceptor. Positions 366 and 377 each coordinate UDP-N-acetyl-alpha-D-glucosamine. Acetyl-CoA is bound by residues 386–387, A423, and R440; that span reads NY.

It in the N-terminal section; belongs to the N-acetylglucosamine-1-phosphate uridyltransferase family. The protein in the C-terminal section; belongs to the transferase hexapeptide repeat family. In terms of assembly, homotrimer. The cofactor is Mg(2+).

Its subcellular location is the cytoplasm. It catalyses the reaction alpha-D-glucosamine 1-phosphate + acetyl-CoA = N-acetyl-alpha-D-glucosamine 1-phosphate + CoA + H(+). The enzyme catalyses N-acetyl-alpha-D-glucosamine 1-phosphate + UTP + H(+) = UDP-N-acetyl-alpha-D-glucosamine + diphosphate. It functions in the pathway nucleotide-sugar biosynthesis; UDP-N-acetyl-alpha-D-glucosamine biosynthesis; N-acetyl-alpha-D-glucosamine 1-phosphate from alpha-D-glucosamine 6-phosphate (route II): step 2/2. Its pathway is nucleotide-sugar biosynthesis; UDP-N-acetyl-alpha-D-glucosamine biosynthesis; UDP-N-acetyl-alpha-D-glucosamine from N-acetyl-alpha-D-glucosamine 1-phosphate: step 1/1. The protein operates within bacterial outer membrane biogenesis; LPS lipid A biosynthesis. Functionally, catalyzes the last two sequential reactions in the de novo biosynthetic pathway for UDP-N-acetylglucosamine (UDP-GlcNAc). The C-terminal domain catalyzes the transfer of acetyl group from acetyl coenzyme A to glucosamine-1-phosphate (GlcN-1-P) to produce N-acetylglucosamine-1-phosphate (GlcNAc-1-P), which is converted into UDP-GlcNAc by the transfer of uridine 5-monophosphate (from uridine 5-triphosphate), a reaction catalyzed by the N-terminal domain. In Bacillus thuringiensis subsp. konkukian (strain 97-27), this protein is Bifunctional protein GlmU.